Consider the following 256-residue polypeptide: Thiazole synthase (256 aa).

K95 (schiff-base intermediate with DXP) is an active-site residue. 1-deoxy-D-xylulose 5-phosphate-binding positions include G156, 182-183 (AG), and 204-205 (NT).

It belongs to the ThiG family. Homotetramer. Forms heterodimers with either ThiH or ThiS.

Its subcellular location is the cytoplasm. The enzyme catalyses [ThiS sulfur-carrier protein]-C-terminal-Gly-aminoethanethioate + 2-iminoacetate + 1-deoxy-D-xylulose 5-phosphate = [ThiS sulfur-carrier protein]-C-terminal Gly-Gly + 2-[(2R,5Z)-2-carboxy-4-methylthiazol-5(2H)-ylidene]ethyl phosphate + 2 H2O + H(+). Its pathway is cofactor biosynthesis; thiamine diphosphate biosynthesis. In terms of biological role, catalyzes the rearrangement of 1-deoxy-D-xylulose 5-phosphate (DXP) to produce the thiazole phosphate moiety of thiamine. Sulfur is provided by the thiocarboxylate moiety of the carrier protein ThiS. In vitro, sulfur can be provided by H(2)S. The protein is Thiazole synthase of Escherichia coli O6:H1 (strain CFT073 / ATCC 700928 / UPEC).